The chain runs to 309 residues: MLSSTCTAAVRGLSTTAQLSKINNVTIIGAGLMGSGIAQVSANAKLNVTVVDSNQSALEKAQQGIANSLKRVAKKKHADDAAAQTALVSSVLDRIKMSTNVSDSVKDADLVIEAIVENIDIKRKLFAEVEVAAKPTTLITTNTSSLRLADIGLNLKDKSRFGGLHFFNPVPMMKLLEVVRHTETSDATFNQLVDYGKTVGKTTVACKDTPGFIVNRLLVPYMFEALRLYERGDASMEDIDVAMKLGAGYPMGPFELSDYVGLDTCKFIMDGWHAQYPEEVAFTPSPLLNSLVDSGKNGRKSGEGFYKYK.

Belongs to the 3-hydroxyacyl-CoA dehydrogenase family. As to quaternary structure, homodimer.

It localises to the mitochondrion matrix. The enzyme catalyses a (3S)-3-hydroxyacyl-CoA + NAD(+) = a 3-oxoacyl-CoA + NADH + H(+). The protein operates within lipid metabolism; fatty acid beta-oxidation. The polypeptide is Probable 3-hydroxyacyl-CoA dehydrogenase B0272.3 (Caenorhabditis elegans).